We begin with the raw amino-acid sequence, 674 residues long: Kinesin-like protein KIFC1 (674 aa).

3 positions are modified to phosphoserine: S28, S33, and S35. Positions 66–96 are disordered; the sequence is TSRPRGPLLSTVSQTQGHTAAQKGPKKTGPR. Polar residues predominate over residues 75 to 84; sequence STVSQTQGHT. Residues 146 to 315 are a coiled coil; it reads DLNEELKRYR…QELKGNIRVF (170 aa). The region spanning 311-664 is the Kinesin motor domain; that stretch reads NIRVFCRVRP…LRFASKVNQC (354 aa). The tract at residues 327-366 is disordered; the sequence is TPSPGFLVFPPGPAGPSDPPTGLSLSRSDDRRSTLTGAPA. The span at 336–345 shows a compositional bias: pro residues; that stretch reads PPGPAGPSDP. T360 carries the post-translational modification Phosphothreonine. Residue 411–418 coordinates ATP; that stretch reads GQTGSGKT.

It belongs to the TRAFAC class myosin-kinesin ATPase superfamily. Kinesin family. NCD subfamily. Binds NUBP1 and NUBP2. Interacts with PPP1R42. In terms of tissue distribution, highly expressed in 14 dpc embryos, spleen and NIH3T3 cells. Also expressed in testis, brain, lung, kidney and cultured astrocytes. Very low levels in skeletal muscle and heart.

The protein localises to the nucleus. It localises to the cytoplasm. It is found in the cytoskeleton. Its subcellular location is the microtubule organizing center. The protein resides in the centrosome. The protein localises to the spindle. It localises to the early endosome. In terms of biological role, minus end-directed microtubule-dependent motor required for bipolar spindle formation. May contribute to movement of early endocytic vesicles. Regulates cilium formation and structure. This chain is Kinesin-like protein KIFC1, found in Mus musculus (Mouse).